A 229-amino-acid polypeptide reads, in one-letter code: Potassium/proton antiporter CemA (229 aa).

Helical transmembrane passes span alanine 6–cysteine 26, isoleucine 107–alanine 127, and isoleucine 189–isoleucine 209.

Belongs to the CemA family.

The protein localises to the plastid. The protein resides in the chloroplast inner membrane. The catalysed reaction is K(+)(in) + H(+)(out) = K(+)(out) + H(+)(in). Its function is as follows. Contributes to K(+)/H(+) antiport activity by supporting proton efflux to control proton extrusion and homeostasis in chloroplasts in a light-dependent manner to modulate photosynthesis. Prevents excessive induction of non-photochemical quenching (NPQ) under continuous-light conditions. Indirectly promotes efficient inorganic carbon uptake into chloroplasts. This Crucihimalaya wallichii (Rock-cress) protein is Potassium/proton antiporter CemA.